We begin with the raw amino-acid sequence, 461 residues long: Piperine synthase (461 aa).

Active-site proton acceptor residues include histidine 168 and aspartate 387. The short motif at 459–461 is the Microbody targeting signal element; the sequence is SRM.

It belongs to the plant acyltransferase family. Monomer. As to expression, confined to immature fruits perisperm. Also detectable in roots.

It localises to the cytoplasm. The catalysed reaction is piperidine + (E,E)-piperoyl-CoA = piperine + CoA + H(+). The enzyme catalyses pyrrolidine + (E,E)-piperoyl-CoA = piperyline + CoA + H(+). It carries out the reaction (E,E)-piperoyl-CoA + 2-methylpropan-1-amine = (E,E)-piperlonguminine + CoA + H(+). It functions in the pathway aromatic compound metabolism. Involved in the biosynthesis of aromatic piperamides natural products such as piperine (1-piperoyl-piperidine), the pungent principle contributing, together with several terpenoids, to the aromatic properties of black pepper fruits, and displaying numerous pharmacological activities such as antiproliferative, antitumor, antiangiogenesis, antioxidant, antidiabetic, antiobesity, cardioprotective, antimicrobial, antiaging, and immunomodulatory effects. Mediates mainly the conversion of piperidine and piperoyl-CoA to piperine. Can also use pyrrolidine and isobutylamine as acceptors and 3,4-methylenedioxycinnamoyl-CoA as an alternative CoA-donor with a lower efficiency. The sequence is that of Piperine synthase from Piper nigrum (Black pepper).